We begin with the raw amino-acid sequence, 356 residues long: Probable D-xylulose reductase A (356 aa).

Zn(2+) is bound by residues Cys-45, His-70, and Glu-71. Residue 180–185 (GAGPVG) participates in NAD(+) binding.

Belongs to the zinc-containing alcohol dehydrogenase family. Requires Zn(2+) as cofactor.

It carries out the reaction xylitol + NAD(+) = D-xylulose + NADH + H(+). Its pathway is carbohydrate degradation; L-arabinose degradation via L-arabinitol; D-xylulose 5-phosphate from L-arabinose (fungal route): step 4/5. Its function is as follows. Xylitol dehydrogenase which catalyzes the conversion of xylitol to D-xylulose. Xylose is a major component of hemicelluloses such as xylan. Most fungi utilize D-xylose via three enzymatic reactions, xylose reductase (XR), xylitol dehydrogenase (XDH), and xylulokinase, to form xylulose 5-phosphate, which enters pentose phosphate pathway. The polypeptide is Probable D-xylulose reductase A (xdhA) (Arthroderma otae (strain ATCC MYA-4605 / CBS 113480) (Microsporum canis)).